We begin with the raw amino-acid sequence, 332 residues long: UPF0194 membrane protein YbhG (332 aa).

The N-terminal stretch at Met1 to Ala16 is a signal peptide. Residues Glu108 to Ala209 adopt a coiled-coil conformation.

Belongs to the UPF0194 family.

It is found in the periplasm. The polypeptide is UPF0194 membrane protein YbhG (Escherichia coli (strain 55989 / EAEC)).